A 411-amino-acid polypeptide reads, in one-letter code: Putative ion-transport protein YfeO (411 aa).

Transmembrane regions (helical) follow at residues 9–29 (MLLL…VLIA), 54–74 (DSPF…GLII), 99–119 (ALPG…SLGP), 149–169 (ILAS…AALI), 186–206 (LFAP…FFHP), 223–243 (IASG…AVWC), 258–278 (VLIL…GGPL), 296–316 (LGAG…VIAA), 322–342 (GGRI…LHAH), 343–363 (VEAV…VLVV), and 386–406 (LLCI…LLAA).

Belongs to the chloride channel (TC 2.A.49) family.

It localises to the cell membrane. The sequence is that of Putative ion-transport protein YfeO from Salmonella schwarzengrund (strain CVM19633).